The primary structure comprises 205 residues: dITP/XTP pyrophosphatase (205 aa).

A substrate-binding site is contributed by 11-16; the sequence is TKNMGK. Mg(2+)-binding residues include Glu-44 and Asp-73. Asp-73 functions as the Proton acceptor in the catalytic mechanism. Substrate is bound by residues Ser-74, 158 to 161, Lys-181, and 186 to 187; these read FGYD and HR.

The protein belongs to the HAM1 NTPase family. In terms of assembly, homodimer. It depends on Mg(2+) as a cofactor.

The enzyme catalyses XTP + H2O = XMP + diphosphate + H(+). It carries out the reaction dITP + H2O = dIMP + diphosphate + H(+). The catalysed reaction is ITP + H2O = IMP + diphosphate + H(+). Functionally, pyrophosphatase that catalyzes the hydrolysis of nucleoside triphosphates to their monophosphate derivatives, with a high preference for the non-canonical purine nucleotides XTP (xanthosine triphosphate), dITP (deoxyinosine triphosphate) and ITP. Seems to function as a house-cleaning enzyme that removes non-canonical purine nucleotides from the nucleotide pool, thus preventing their incorporation into DNA/RNA and avoiding chromosomal lesions. This chain is dITP/XTP pyrophosphatase, found in Bacillus cereus (strain ATCC 14579 / DSM 31 / CCUG 7414 / JCM 2152 / NBRC 15305 / NCIMB 9373 / NCTC 2599 / NRRL B-3711).